Reading from the N-terminus, the 882-residue chain is Probable LRR receptor-like serine/threonine-protein kinase At1g12460 (882 aa).

The N-terminal stretch at 1 to 21 is a signal peptide; it reads MRKVHLFLVLVHFIYISTSRS. Over 22 to 515 the chain is Extracellular; sequence DSISERDILL…SRNSDALSIS (494 aa). An N-linked (GlcNAc...) asparagine glycan is attached at N76. LRR repeat units lie at residues 92–113, 116–138, 140–162, 165–187, 189–210, 213–235, 237–258, 261–283, 285–308, 309–331, 333–355, 357–379, 381–404, 405–427, 429–451, and 453–475; these read FIRVLNLFGNRFTGNLPLDYFK, TLWTINVSSNALSGPIPEFISEL, SLRFLDLSKNGFTGEIPVSLFKF, KTKFVSLAHNNIFGSIPASIVNC, NLVGFDFSYNNLKGVLPPRICD, VLEYISVRNNLLSGDVSEEIQKC, RLILVDLGSNLFHGLAPFAVLT, NITYFNVSWNRFGGEIGEIVDCS, SLEFLDASSNELTGRIPTGVMGCK, SLKLLDLESNKLNGSIPGSIGKM, SLSVIRLGNNSIDGVIPRDIGSL, FLQVLNLHNLNLIGEVPEDISNC, VLLELDVSGNDLEGKISKKLLNLT, NIKILDLHRNRLNGSIPPELGNL, KVQFLDLSQNSLSGPIPSSLGSL, and TLTHFNVSYNNLSGVIPPVPMIQ. N121 carries N-linked (GlcNAc...) asparagine glycosylation. N261 and N266 each carry an N-linked (GlcNAc...) asparagine glycan. N-linked (GlcNAc...) asparagine glycosylation is found at N321 and N341. 3 N-linked (GlcNAc...) asparagine glycosylation sites follow: N402, N417, and N426. N-linked (GlcNAc...) asparagine glycans are attached at residues N458 and N463. A helical membrane pass occupies residues 516-536; the sequence is VIIVIIAAAVILFGVCIVLAL. The Cytoplasmic portion of the chain corresponds to 537-882; that stretch reads NLRARKRRKD…LESIRNGFGS (346 aa). At T589 the chain carries Phosphothreonine. One can recognise a Protein kinase domain in the interval 593-876; the sequence is LDKENIIGMG…AEVVQVLESI (284 aa). Residues 599–607 and K621 each bind ATP; that span reads IGMGSIGSV. The residue at position 770 (Y770) is a Phosphotyrosine.

It belongs to the protein kinase superfamily. Ser/Thr protein kinase family.

The protein localises to the cell membrane. The catalysed reaction is L-seryl-[protein] + ATP = O-phospho-L-seryl-[protein] + ADP + H(+). The enzyme catalyses L-threonyl-[protein] + ATP = O-phospho-L-threonyl-[protein] + ADP + H(+). This chain is Probable LRR receptor-like serine/threonine-protein kinase At1g12460, found in Arabidopsis thaliana (Mouse-ear cress).